The primary structure comprises 542 residues: Signal peptide peptidase-like 5 (542 aa).

The signal sequence occupies residues 1–23; sequence MAAATAAVFALLMASALAGAAAG. Residues 24 to 192 lie on the Lumenal side of the membrane; it reads GDIVHHDDEA…PDRPVVDTAE (169 aa). 2 N-linked (GlcNAc...) asparagine glycosylation sites follow: asparagine 79 and asparagine 145. A PA domain is found at 92–167; the sequence is CTSPKEKVSG…LPRDAGFALH (76 aa). Residues 193–213 form a helical membrane-spanning segment; the sequence is VFLWLMAVGTVLCASYWSAWS. Residues 214 to 245 lie on the Cytoplasmic side of the membrane; that stretch reads AREALCEQEKLLKDGREVLLNVENGSSSGMID. Residues 246-266 form a helical membrane-spanning segment; it reads INVASAIMFVVVASCFLIMLY. Residues 267-275 are Lumenal-facing; it reads KMMSSWFVE. Residues 276-296 traverse the membrane as a helical segment; that stretch reads LLVVIFCVGGVEGLQTCLVAL. The Cytoplasmic segment spans residues 297–316; that stretch reads LSRWFRAASESFFKVPFFGA. A helical membrane pass occupies residues 317-337; sequence VSYLTLAVSPFCIVFAVLWAV. The Lumenal portion of the chain corresponds to 338-342; it reads HRHFT. Residues 343 to 363 traverse the membrane as a helical segment; sequence YAWIGQDILGIALIITVIQIV. Topologically, residues 364-367 are cytoplasmic; the sequence is RVPN. A helical transmembrane segment spans residues 368 to 388; it reads LKVGSVLLSCAFFYDIFWVFV. Aspartate 382 is a catalytic residue. Topologically, residues 389 to 426 are lumenal; sequence SKRWFHESVMIVVARGDKTDEDGVPMLLKIPRMFDPWG. The helical transmembrane segment at 427–447 threads the bilayer; it reads GYSIIGFGDILLPGLLVAFAL. The active site involves aspartate 435. Residues 448–459 are Cytoplasmic-facing; sequence RYDWAAKKSLQT. The helical transmembrane segment at 460–480 threads the bilayer; it reads GYFLWSMVAYGSGLLITYVAL. Over 481–486 the chain is Lumenal; sequence NLMDGH. A helical transmembrane segment spans residues 487–507; it reads GQPALLYIVPFTLGALISLGW. The PAL motif lies at 489 to 491; sequence PAL. Residues 508 to 542 lie on the Cytoplasmic side of the membrane; sequence KRGELWNLWSKGEPERVCPHHMHMQPQPKTPPLVQ.

The protein belongs to the peptidase A22B family. Glycosylated.

The protein resides in the endosome membrane. In terms of biological role, intramembrane-cleaving aspartic protease (I-CLiP) that cleaves type II membrane signal peptides in the hydrophobic plane of the membrane. In Oryza sativa subsp. japonica (Rice), this protein is Signal peptide peptidase-like 5 (SPPL5).